Here is a 702-residue protein sequence, read N- to C-terminus: p-hydroxybenzoic acid--AMP ligase FadD22 (702 aa).

A Carrier domain is found at Glu538–Leu616. Ser576 is subject to O-(pantetheine 4'-phosphoryl)serine.

Belongs to the ATP-dependent AMP-binding enzyme family.

It catalyses the reaction holo-[4-hydroxyphenylalkanoate synthase] + 4-hydroxybenzoate + ATP = 4-hydroxyphenyl-[4-hydroxyphenylalkanoate synthase] + AMP + diphosphate. It participates in lipid metabolism; fatty acid biosynthesis. Catalyzes the adenylation of p-hydroxybenzoic acid (pHBA) to form p-hydroxybenzoic acid-AMP (pHBA-AMP), which is converted directly to p-hydroxybenzoyl-S-FadD22 (pHBA-S-FAdD22) thioester intermediate in a CoA-independent manner by attack of the phosphopantetheine thiol of FadD22. This intermediate primes the biosynthesis of the phenolphthiocerol (PPOL) by presenting the pHBA starter unit for elongation by Pks15/1. PPOL is an important intermediate in the biosynthesis of phenolic glycolipid (mycosid B). In Mycobacterium marinum (strain ATCC BAA-535 / M), this protein is p-hydroxybenzoic acid--AMP ligase FadD22 (fadD22).